The following is a 471-amino-acid chain: Regulator of microtubule dynamics protein 3 (471 aa).

Residues 1–9 (MSSLGTLGG) lie on the Mitochondrial intermembrane side of the membrane. Residues 10–32 (ARAGLGLLLGTAAGLGFLCALYS) traverse the membrane as a helical segment. The Cytoplasmic portion of the chain corresponds to 33 to 471 (QRWKRTQRRG…LEELEVILGE (439 aa)). A disordered region spans residues 39–70 (QRRGQSQSQSNSLDYTQTSEPGRQVRPLRAAP). Positions 41-50 (RGQSQSQSNS) are enriched in low complexity. Phosphoserine is present on residues serine 44, serine 46, serine 50, and serine 57. Residues 90–123 (LDRLEFVLTSLVALRREVEELRSSLQGLAGQIVG) are a coiled coil. The FFAT motif lies at 156-162 (VYFTAAS). Phosphothreonine is present on threonine 159. The tract at residues 169 to 206 (AESEGGYTTANAESDYERDSERESDGDGEDEVSCETVK) is disordered. Residues serine 182, serine 192, serine 212, and serine 233 each carry the phosphoserine modification. The span at 183–193 (DYERDSERESD) shows a compositional bias: basic and acidic residues.

This sequence belongs to the RMDN family. As to quaternary structure, interacts with PTPN2. Interacts with microtubules. Interacts with VAPB. Interacts (via FFAT motif) with MOSPD2 (via MSP domain). Interacts (via phosphorylated FFAT motif) with MOSPD2, VAPA and VAPB. In terms of processing, phosphorylation at Thr-160 of the FFAT motif activates interaction with MOSPD2, VAPA and VAPB.

The protein localises to the mitochondrion outer membrane. It localises to the cytoplasm. It is found in the nucleus. The protein resides in the cytoskeleton. Its subcellular location is the spindle. The protein localises to the spindle pole. Its function is as follows. Involved in cellular calcium homeostasis regulation. May participate in differentiation and apoptosis of keratinocytes. Overexpression induces apoptosis. This chain is Regulator of microtubule dynamics protein 3, found in Bos taurus (Bovine).